The following is a 352-amino-acid chain: 3-isopropylmalate dehydrogenase (352 aa).

An NAD(+)-binding site is contributed by 71–87 (GAHDSAWNQLPRHLRPE). Substrate is bound by residues arginine 94, arginine 104, arginine 132, and aspartate 218. Residues aspartate 218, aspartate 242, and aspartate 246 each contribute to the Mg(2+) site. 275 to 287 (GSAPDIAGQGVAN) serves as a coordination point for NAD(+).

Belongs to the isocitrate and isopropylmalate dehydrogenases family. LeuB type 1 subfamily. Homodimer. It depends on Mg(2+) as a cofactor. The cofactor is Mn(2+).

Its subcellular location is the cytoplasm. It carries out the reaction (2R,3S)-3-isopropylmalate + NAD(+) = 4-methyl-2-oxopentanoate + CO2 + NADH. It functions in the pathway amino-acid biosynthesis; L-leucine biosynthesis; L-leucine from 3-methyl-2-oxobutanoate: step 3/4. Functionally, catalyzes the oxidation of 3-carboxy-2-hydroxy-4-methylpentanoate (3-isopropylmalate) to 3-carboxy-4-methyl-2-oxopentanoate. The product decarboxylates to 4-methyl-2 oxopentanoate. This Deinococcus radiodurans (strain ATCC 13939 / DSM 20539 / JCM 16871 / CCUG 27074 / LMG 4051 / NBRC 15346 / NCIMB 9279 / VKM B-1422 / R1) protein is 3-isopropylmalate dehydrogenase.